Reading from the N-terminus, the 187-residue chain is Thermosensitive gluconokinase (187 aa).

10-17 serves as a coordination point for ATP; the sequence is GVSGSGKT.

This sequence belongs to the gluconokinase GntK/GntV family.

The catalysed reaction is D-gluconate + ATP = 6-phospho-D-gluconate + ADP + H(+). It functions in the pathway carbohydrate acid metabolism; L-idonate degradation. This chain is Thermosensitive gluconokinase (idnK), found in Escherichia coli (strain K12).